The sequence spans 361 residues: MTAQQAQRFPGTGLQWSLGLIALILAACLISDGLSGGPQLSLPLLLAGALSWLVCWIGVPRLRALKMGQVIRQEGPQSHQSKSGTPTMGGLLLVPCGVVVGSLVSPGDPRLLPIGLVTLAFMVIGGIDDWRSLTKRHNTGLTPKGKLLLQALAAGLFLLWAGLHGAIPTAIALPWGWLLPIGLLIWPLGLFVFLAESNATNLTDGLDGLAAGVGAIVLVGLSLQLMLRGNGGDPALAGYGAALAGAWLGFLLHNRHPARVFMGDTGSLAMGAALSAIALLSNSLWPLLLMGGLLLAESLSVILQVWVFKATKGADGQGKRLLRMAPLHHHFELGGWSERRVVVSFWGISLLLVALGLVLVP.

The next 11 membrane-spanning stretches (helical) occupy residues 10–30 (PGTG…ACLI), 40–60 (LSLP…IGVP), 84–104 (GTPT…GSLV), 107–127 (GDPR…IGGI), 147–167 (LLLQ…HGAI), 175–195 (WGWL…VFLA), 206–226 (LDGL…LQLM), 232–252 (GDPA…GFLL), 260–280 (VFMG…IALL), 288–308 (LLMG…VWVF), and 341–361 (VVVS…VLVP).

Belongs to the glycosyltransferase 4 family. MraY subfamily. It depends on Mg(2+) as a cofactor.

It localises to the cell inner membrane. It catalyses the reaction UDP-N-acetyl-alpha-D-muramoyl-L-alanyl-gamma-D-glutamyl-meso-2,6-diaminopimeloyl-D-alanyl-D-alanine + di-trans,octa-cis-undecaprenyl phosphate = di-trans,octa-cis-undecaprenyl diphospho-N-acetyl-alpha-D-muramoyl-L-alanyl-D-glutamyl-meso-2,6-diaminopimeloyl-D-alanyl-D-alanine + UMP. Its pathway is cell wall biogenesis; peptidoglycan biosynthesis. In terms of biological role, catalyzes the initial step of the lipid cycle reactions in the biosynthesis of the cell wall peptidoglycan: transfers peptidoglycan precursor phospho-MurNAc-pentapeptide from UDP-MurNAc-pentapeptide onto the lipid carrier undecaprenyl phosphate, yielding undecaprenyl-pyrophosphoryl-MurNAc-pentapeptide, known as lipid I. This Synechococcus sp. (strain RCC307) protein is Phospho-N-acetylmuramoyl-pentapeptide-transferase.